The sequence spans 750 residues: 5-methyltetrahydropteroyltriglutamate--homocysteine methyltransferase (750 aa).

Residues arginine 15–lysine 18 and lysine 114 contribute to the 5-methyltetrahydropteroyltri-L-glutamate site. Residues isoleucine 425–serine 427 and glutamate 478 each bind L-homocysteine. L-methionine is bound by residues isoleucine 425 to serine 427 and glutamate 478. Position 555 (tryptophan 555) interacts with 5-methyltetrahydropteroyltri-L-glutamate. Residue aspartate 593 coordinates L-homocysteine. Residue aspartate 593 participates in L-methionine binding. Glutamate 599 contacts 5-methyltetrahydropteroyltri-L-glutamate. Zn(2+)-binding residues include histidine 636, cysteine 638, and glutamate 660. Catalysis depends on histidine 689, which acts as the Proton donor. Cysteine 721 serves as a coordination point for Zn(2+).

It belongs to the vitamin-B12 independent methionine synthase family. It depends on Zn(2+) as a cofactor.

It catalyses the reaction 5-methyltetrahydropteroyltri-L-glutamate + L-homocysteine = tetrahydropteroyltri-L-glutamate + L-methionine. Its pathway is amino-acid biosynthesis; L-methionine biosynthesis via de novo pathway; L-methionine from L-homocysteine (MetE route): step 1/1. Its function is as follows. Catalyzes the transfer of a methyl group from 5-methyltetrahydrofolate to homocysteine resulting in methionine formation. This chain is 5-methyltetrahydropteroyltriglutamate--homocysteine methyltransferase, found in Streptococcus gordonii (strain Challis / ATCC 35105 / BCRC 15272 / CH1 / DL1 / V288).